A 184-amino-acid chain; its full sequence is ATP synthase subunit delta (184 aa).

This sequence belongs to the ATPase delta chain family. F-type ATPases have 2 components, F(1) - the catalytic core - and F(0) - the membrane proton channel. F(1) has five subunits: alpha(3), beta(3), gamma(1), delta(1), epsilon(1). F(0) has three main subunits: a(1), b(2) and c(10-14). The alpha and beta chains form an alternating ring which encloses part of the gamma chain. F(1) is attached to F(0) by a central stalk formed by the gamma and epsilon chains, while a peripheral stalk is formed by the delta and b chains.

The protein localises to the cell inner membrane. F(1)F(0) ATP synthase produces ATP from ADP in the presence of a proton or sodium gradient. F-type ATPases consist of two structural domains, F(1) containing the extramembraneous catalytic core and F(0) containing the membrane proton channel, linked together by a central stalk and a peripheral stalk. During catalysis, ATP synthesis in the catalytic domain of F(1) is coupled via a rotary mechanism of the central stalk subunits to proton translocation. Functionally, this protein is part of the stalk that links CF(0) to CF(1). It either transmits conformational changes from CF(0) to CF(1) or is implicated in proton conduction. This is ATP synthase subunit delta from Rickettsia peacockii (strain Rustic).